The primary structure comprises 553 residues: Formate--tetrahydrofolate ligase (553 aa).

63 to 70 (TPAGEGKS) provides a ligand contact to ATP.

The protein belongs to the formate--tetrahydrofolate ligase family.

The enzyme catalyses (6S)-5,6,7,8-tetrahydrofolate + formate + ATP = (6R)-10-formyltetrahydrofolate + ADP + phosphate. It functions in the pathway one-carbon metabolism; tetrahydrofolate interconversion. The chain is Formate--tetrahydrofolate ligase from Limosilactobacillus fermentum (strain NBRC 3956 / LMG 18251) (Lactobacillus fermentum).